A 622-amino-acid chain; its full sequence is Pentatricopeptide repeat-containing protein At5g06540 (622 aa).

PPR repeat units follow at residues 81 to 115, 116 to 150, 151 to 181, 182 to 212, 213 to 247, 248 to 282, 283 to 313, 314 to 348, 349 to 384, and 385 to 419; these read NLFV…RIWP, DNIT…GFQN, DVYV…MGFR, DVVS…MPHR, NLFT…GVVA, NETV…HMTV, NLIL…LPET, DSLS…GFIP, RDVT…GIEP, and RLEH…PNAP. The type E motif stretch occupies residues 420-495; the sequence is ILGALLGACK…PPGWSLIEID (76 aa). Positions 496 to 527 are type E(+) motif; the sequence is GKINKFTMGDDQKHPEMGKIRRKWEEILGKIR. The tract at residues 528 to 622 is type DYW motif; that stretch reads LIGYKGNTGD…NGVCSCRDYW (95 aa).

It belongs to the PPR family. PCMP-H subfamily.

This chain is Pentatricopeptide repeat-containing protein At5g06540 (PCMP-H88), found in Arabidopsis thaliana (Mouse-ear cress).